A 447-amino-acid polypeptide reads, in one-letter code: Naphthalene 1,2-dioxygenase system, large oxygenase component (447 aa).

In terms of domain architecture, Rieske spans 37 to 135 (WLFLTHDSLI…IKKKCLGLKE (99 aa)). [2Fe-2S] cluster-binding residues include C79, H81, C99, and H102. H206, H211, and D360 together coordinate Fe cation.

Belongs to the bacterial ring-hydroxylating dioxygenase alpha subunit family. The naphthalene dioxygenase (NDO) multicomponent enzyme system is composed of an electron transfer component and a dioxygenase component (iron sulfur protein (ISP)). The electron transfer component is composed of a ferredoxin reductase (NagAa) and a ferredoxin (NagAb), and the dioxygenase component is formed by a large alpha subunit (NagAc) and a small beta subunit (NagAd). It depends on [2Fe-2S] cluster as a cofactor. Fe(2+) is required as a cofactor.

The enzyme catalyses naphthalene + NADH + O2 + H(+) = (1R,2S)-1,2-dihydronaphthalene-1,2-diol + NAD(+). It functions in the pathway aromatic compound metabolism; naphthalene degradation. Functionally, component of the naphthalene dioxygenase (NDO) multicomponent enzyme system which catalyzes the incorporation of both atoms of molecular oxygen into naphthalene to form cis-(1R,2S)-dihydroxy-1,2-dihydronaphthalene. The alpha subunit has a catalytic role in the holoenzyme. Also able to use styrene as substrate. This Ralstonia sp protein is Naphthalene 1,2-dioxygenase system, large oxygenase component.